The primary structure comprises 614 residues: Protein NRT1/ PTR FAMILY 7.3 (614 aa).

2 helical membrane passes run 41-61 and 87-107; these read WVAGIVILLNQGLATLAFFGV and WTGTVYIFSLVGAFLSDSYWG. Residue Thr111 is modified to Phosphothreonine. 9 helical membrane-spanning segments follow: residues 114-134, 152-172, 196-216, 226-246, 355-375, 390-410, 435-455, 515-535, and 559-579; these read IFQVIFVIGLSSLSLSSYMFL, MMEITMFYFSIYLIALGYGGY, IAFFSYFYLALNLGSLFSNTI, WALGFWASTGSAIIGLILFLV, PIWLCTIIYSVVFTQMASLFV, IPPASMSSFDILSVALFIFLY, MGIGLVIAVIAMIAAGIVECY, LCMMSMSMGNFVSSLLVTMVV, and FYFLLAALTSIDLVVYIACAK. A disordered region spans residues 592 to 614; it reads MQDMSDDDYDTESEEEREKDSKV. The segment covering 593-606 has biased composition (acidic residues); sequence QDMSDDDYDTESEE.

It belongs to the major facilitator superfamily. Proton-dependent oligopeptide transporter (POT/PTR) (TC 2.A.17) family. High expression in roots. Barely detected in shoots. Expressed in root pericycle cells close to the xylem.

The protein resides in the cell membrane. In terms of biological role, low-affinity proton-dependent bidirectional nitrate transporter. Involved in nitrate loading into xylem and not in nitrate uptake. Not involved in histidine or dipeptides transport. This Arabidopsis thaliana (Mouse-ear cress) protein is Protein NRT1/ PTR FAMILY 7.3 (NPF7.3).